We begin with the raw amino-acid sequence, 236 residues long: Large ribosomal subunit protein uL1 (236 aa).

This sequence belongs to the universal ribosomal protein uL1 family. Part of the 50S ribosomal subunit.

Its function is as follows. Binds directly to 23S rRNA. The L1 stalk is quite mobile in the ribosome, and is involved in E site tRNA release. Protein L1 is also a translational repressor protein, it controls the translation of the L11 operon by binding to its mRNA. In Corynebacterium efficiens (strain DSM 44549 / YS-314 / AJ 12310 / JCM 11189 / NBRC 100395), this protein is Large ribosomal subunit protein uL1.